The chain runs to 198 residues: NAD(P)H dehydrogenase (quinone) (198 aa).

The 186-residue stretch at 4 to 189 (VLVLYYSMYG…SIARYQGEYV (186 aa)) folds into the Flavodoxin-like domain. Residues 10–15 (SMYGHI) and 78–80 (TRF) contribute to the FMN site. Tyrosine 12 lines the NAD(+) pocket. Position 98 (tryptophan 98) interacts with substrate. FMN-binding positions include 113–118 (STGTGG) and histidine 133.

Belongs to the WrbA family. FMN is required as a cofactor.

The enzyme catalyses a quinone + NADH + H(+) = a quinol + NAD(+). It catalyses the reaction a quinone + NADPH + H(+) = a quinol + NADP(+). This chain is NAD(P)H dehydrogenase (quinone), found in Escherichia coli O157:H7.